Here is a 344-residue protein sequence, read N- to C-terminus: Mitochondrial genome maintenance exonuclease 1 (344 aa).

Catalysis depends on residues Asp238, Asp251, and Lys253. Ser343 is modified (phosphoserine).

Belongs to the MGME1 family.

The protein localises to the mitochondrion. Metal-dependent single-stranded DNA (ssDNA) exonuclease involved in mitochondrial genome maintenance. Has preference for 5'-3' exonuclease activity but is also capable of endonuclease activity on linear substrates. Necessary for maintenance of proper 7S DNA levels. Probably involved in mitochondrial DNA (mtDNA) repair, possibly via the processing of displaced DNA containing Okazaki fragments during RNA-primed DNA synthesis on the lagging strand or via processing of DNA flaps during long-patch base excision repair. Specifically binds 5-hydroxymethylcytosine (5hmC)-containing DNA in stem cells. The sequence is that of Mitochondrial genome maintenance exonuclease 1 from Homo sapiens (Human).